The primary structure comprises 253 residues: Ubiquinone biosynthesis O-methyltransferase (253 aa).

S-adenosyl-L-methionine-binding residues include R45, G76, D97, and M140.

It belongs to the methyltransferase superfamily. UbiG/COQ3 family.

The enzyme catalyses a 3-demethylubiquinol + S-adenosyl-L-methionine = a ubiquinol + S-adenosyl-L-homocysteine + H(+). It carries out the reaction a 3-(all-trans-polyprenyl)benzene-1,2-diol + S-adenosyl-L-methionine = a 2-methoxy-6-(all-trans-polyprenyl)phenol + S-adenosyl-L-homocysteine + H(+). It functions in the pathway cofactor biosynthesis; ubiquinone biosynthesis. Functionally, O-methyltransferase that catalyzes the 2 O-methylation steps in the ubiquinone biosynthetic pathway. The polypeptide is Ubiquinone biosynthesis O-methyltransferase (Parvibaculum lavamentivorans (strain DS-1 / DSM 13023 / NCIMB 13966)).